A 167-amino-acid polypeptide reads, in one-letter code: MENFLRKTAWLYLSIAVSVFLLDIITKNLAEKLFTTHVEVFPFLEFYLIYNKGVAFGLLSELPDPLRLPLLLITPVIALIITFLYALYSGDRIVAISMGLIGGGALGNLYDRLFLGMVRDFIHLHIGEYYWPAFNIADASISIGIALLILKYFFTKPALKNLVNRTR.

The next 3 membrane-spanning stretches (helical) occupy residues 9-29, 68-88, and 98-118; these read AWLY…TKNL, LPLL…YALY, and MGLI…LGMV. Active-site residues include D120 and D138. A helical transmembrane segment spans residues 130–150; the sequence is YWPAFNIADASISIGIALLIL.

This sequence belongs to the peptidase A8 family.

Its subcellular location is the cell inner membrane. It catalyses the reaction Release of signal peptides from bacterial membrane prolipoproteins. Hydrolyzes -Xaa-Yaa-Zaa-|-(S,diacylglyceryl)Cys-, in which Xaa is hydrophobic (preferably Leu), and Yaa (Ala or Ser) and Zaa (Gly or Ala) have small, neutral side chains.. Its pathway is protein modification; lipoprotein biosynthesis (signal peptide cleavage). This protein specifically catalyzes the removal of signal peptides from prolipoproteins. This chain is Lipoprotein signal peptidase, found in Aquifex aeolicus (strain VF5).